We begin with the raw amino-acid sequence, 146 residues long: MDKQIPKFEITRSSLLDQCKSFLPELEKANQTLLEHPDSQQDVQNLSDESNYIEMDLALGVLEKQPENSISEDTESEIQANENQGTLEHLMNLYNSRDREKGNEVTLTDFLHEKLSRAAQADLEHEESASIDQDEMVAIETRKTKK.

The segment covering 119–128 has biased composition (basic and acidic residues); it reads AQADLEHEES. Residues 119 to 146 form a disordered region; sequence AQADLEHEESASIDQDEMVAIETRKTKK.

This is an uncharacterized protein from Schizosaccharomyces pombe (strain 972 / ATCC 24843) (Fission yeast).